The sequence spans 74 residues: Translation initiation factor IF-1 (74 aa).

The S1-like domain maps to Met-1–Lys-73.

Belongs to the IF-1 family. Component of the 30S ribosomal translation pre-initiation complex which assembles on the 30S ribosome in the order IF-2 and IF-3, IF-1 and N-formylmethionyl-tRNA(fMet); mRNA recruitment can occur at any time during PIC assembly.

The protein resides in the cytoplasm. Functionally, one of the essential components for the initiation of protein synthesis. Stabilizes the binding of IF-2 and IF-3 on the 30S subunit to which N-formylmethionyl-tRNA(fMet) subsequently binds. Helps modulate mRNA selection, yielding the 30S pre-initiation complex (PIC). Upon addition of the 50S ribosomal subunit IF-1, IF-2 and IF-3 are released leaving the mature 70S translation initiation complex. This Thermosipho melanesiensis (strain DSM 12029 / CIP 104789 / BI429) protein is Translation initiation factor IF-1.